The primary structure comprises 155 residues: Cyclic pyranopterin monophosphate synthase (155 aa).

Substrate is bound by residues 75-77 (LCH) and 111-112 (ME). The active site involves Asp126.

Belongs to the MoaC family. In terms of assembly, homohexamer; trimer of dimers.

The enzyme catalyses (8S)-3',8-cyclo-7,8-dihydroguanosine 5'-triphosphate = cyclic pyranopterin phosphate + diphosphate. Its pathway is cofactor biosynthesis; molybdopterin biosynthesis. Catalyzes the conversion of (8S)-3',8-cyclo-7,8-dihydroguanosine 5'-triphosphate to cyclic pyranopterin monophosphate (cPMP). This Corynebacterium efficiens (strain DSM 44549 / YS-314 / AJ 12310 / JCM 11189 / NBRC 100395) protein is Cyclic pyranopterin monophosphate synthase.